A 367-amino-acid chain; its full sequence is Dye-decolorizing peroxidase (367 aa).

The active-site Proton acceptor is aspartate 152. Histidine 225 contacts heme. The disordered stretch occupies residues 311–367 (DPDGELAAAEPSDAQNDDPASASARIEETDPPNPASADDPAPADDSLGIGSLRRRDQ). Low complexity predominate over residues 345 to 356 (ASADDPAPADDS). The tract at residues 358 to 365 (GIGSLRRR) is targeting peptide.

This sequence belongs to the DyP-type peroxidase family. As to quaternary structure, homohexamer. It depends on heme b as a cofactor.

Its subcellular location is the encapsulin nanocompartment. Cargo protein of a type 1 encapsulin nanocompartment. Has both general peroxidase activity and dye-decolorizing activity. Can catalyze the oxidation of both protoporphyrinogen IX and coproporphyrinogen III to their corresponding porphyrins. Also efficiently decolorizes the dyes alizarin red and Cibacron blue F3GA. This cargo-loaded encapsulin nanocompartment is probably involved in protection against oxidative damage. The sequence is that of Dye-decolorizing peroxidase from Brevibacterium linens.